A 185-amino-acid chain; its full sequence is Ribosome-recycling factor (185 aa).

Belongs to the RRF family.

The protein localises to the cytoplasm. Its function is as follows. Responsible for the release of ribosomes from messenger RNA at the termination of protein biosynthesis. May increase the efficiency of translation by recycling ribosomes from one round of translation to another. The sequence is that of Ribosome-recycling factor from Desulfatibacillum aliphaticivorans.